Consider the following 184-residue polypeptide: U3 small nucleolar ribonucleoprotein protein IMP3 (184 aa).

The S4 RNA-binding domain maps to Arg109 to Glu175.

It belongs to the universal ribosomal protein uS4 family. Part of the small subunit (SSU) processome, composed of more than 70 proteins and the RNA chaperone small nucleolar RNA (snoRNA) U3. Component of a heterotrimeric complex containing IMP3, IMP4 and MPHOSPH10. Interacts with MPHOSPH10.

It localises to the nucleus. Its subcellular location is the nucleolus. Functionally, component of the 60-80S U3 small nucleolar ribonucleoprotein (U3 snoRNP). Required for the early cleavages during pre-18S ribosomal RNA processing. Part of the small subunit (SSU) processome, first precursor of the small eukaryotic ribosomal subunit. During the assembly of the SSU processome in the nucleolus, many ribosome biogenesis factors, an RNA chaperone and ribosomal proteins associate with the nascent pre-rRNA and work in concert to generate RNA folding, modifications, rearrangements and cleavage as well as targeted degradation of pre-ribosomal RNA by the RNA exosome. This Homo sapiens (Human) protein is U3 small nucleolar ribonucleoprotein protein IMP3.